The following is a 541-amino-acid chain: MGGSAVQVINASEEHTFVLNEDALSEVLMRDEVKDRFVCVVSVAGAFRKGKSFLLDFFLRYMYSKYVHHDATDWLGGESDPLEGFSWRGGSERDTTGILMWSDIFLHDYPNGDKIAIILLDTQGAFDSQSTVRDCATVFALSTMLSSVQIYNLSQNIQEDDLQHLQLFTEYGRLALADTGKKPFQRLQFLVRDWSFPYEAEYGALGGDKILKRRLEVSDKQHPELQSLRRHISSCFTEVACFLMPHPGLNVATNPKFDGRLQDITPEFKSSLRSLVPMLLAPDNLVYKEISGQRVRARDLIQYFQSYMNIYKGNELPEPKSMLVATAEANHLTAVAAAKELYGQLMEEVCGGTRPYLSTAHLQTEHLRVKDKALFQFAAKRKMGGEEFTEKFRKQLEDDLEEVFTNYQAHNESKNIFKAARTPAVYFACAVIMYILSGIFGLVGLYTFANFCNLVMGVALLTLALWAYIRYSGELSDFGGKLDDFATLLWEKFMRPIYHGCMEKGIHHVATHATEMAVGGGAASYRSQTSVNASNGKVKRS.

Over 1–424 the chain is Cytoplasmic; it reads MGGSAVQVIN…NIFKAARTPA (424 aa). The GB1/RHD3-type G domain occupies 35-284; sequence DRFVCVVSVA…LVPMLLAPDN (250 aa). 5 residues coordinate GDP: arginine 48, lysine 49, glycine 50, lysine 51, and serine 52. Positions 48, 49, 50, 51, 52, and 53 each coordinate GTP. Serine 52 provides a ligand contact to Mg(2+). A Mg(2+)-binding site is contributed by aspartate 121. GDP-binding residues include arginine 192, aspartate 193, and valine 251. The GTP site is built by arginine 192, aspartate 193, and valine 251. The segment at 322–413 is 3HB (three-helix bundle) domain; sequence MLVATAEANH…FTNYQAHNES (92 aa). A linker region spans residues 414 to 422; that stretch reads KNIFKAART. Residues 425–445 traverse the membrane as a helical segment; the sequence is VYFACAVIMYILSGIFGLVGL. Residues 446–448 are Lumenal-facing; it reads YTF. Residues 449–469 traverse the membrane as a helical segment; the sequence is ANFCNLVMGVALLTLALWAYI. Residues 470–541 lie on the Cytoplasmic side of the membrane; that stretch reads RYSGELSDFG…NASNGKVKRS (72 aa). Threonine 514 carries the phosphothreonine modification.

The protein belongs to the TRAFAC class dynamin-like GTPase superfamily. GB1/RHD3 GTPase family. GB1 subfamily. Monomeric and homodimeric. The homodimer, transiently formed by two molecules on opposing membranes, is the active form mediating ER membrane fusion. Interacts with spas; interaction may regulate microtubule dynamics. Ubiquitously expressed.

The protein resides in the endoplasmic reticulum membrane. It is found in the golgi apparatus membrane. It carries out the reaction GTP + H2O = GDP + phosphate + H(+). Functionally, membrane-anchored GTPase that mediates the GTP-dependent fusion of endoplasmic reticulum (ER) membranes, maintaining the continuous ER network. It facilitates the formation of three-way junctions where ER tubules intersect. Two atlastin-1 on neighboring ER tubules bind GTP and form loose homodimers through the GB1/RHD3-type G domains and 3HB regions. Upon GTP hydrolysis, the 3HB regions tighten, pulling the membranes together to drive their fusion. After fusion, the homodimer disassembles upon release of inorganic phosphate (Pi). Subsequently, GDP dissociates, resetting the monomers to a conformation ready for a new fusion cycle. May also regulate more or less directly Golgi biogenesis. May also regulate microtubule polymerization and Golgi biogenesis. Required for dopaminergic neurons survival and the growth of muscles and synapses at neuromuscular junctions. In Drosophila melanogaster (Fruit fly), this protein is Atlastin (atl).